The following is a 174-amino-acid chain: Type II secretion system protein M (174 aa).

At 1-32 (MKVMTQFHERLRAQAETSQLAIRWRGLPARDR) the chain is on the cytoplasmic side. A helical transmembrane segment spans residues 33 to 52 (LALLWLGAFLLLVVLYLALW). Residues 53-174 (RPAERHLQSA…VSARLSLRVE (122 aa)) are Periplasmic-facing.

The protein belongs to the GSP M family. Type II secretion system is composed of four main components: the outer membrane complex, the inner membrane complex, the cytoplasmic secretion ATPase and the periplasm-spanning pseudopilus. Forms homodimers. Interacts with XcpY/GspL. Interacts with XcpR/GspE and XcpS/GspF.

Its subcellular location is the cell inner membrane. Its function is as follows. Inner membrane component of the type II secretion system required for the energy-dependent secretion of extracellular factors such as proteases and toxins from the periplasm. Plays a role in the complex assembly and recruits XcpY resulting in a stable complex in the inner membrane. Provides thus a link between the energy-providing XcpR protein in the cytoplasm and the rest of the T2SS machinery. This Pseudomonas aeruginosa (strain ATCC 15692 / DSM 22644 / CIP 104116 / JCM 14847 / LMG 12228 / 1C / PRS 101 / PAO1) protein is Type II secretion system protein M (xcpZ).